Reading from the N-terminus, the 180-residue chain is D(1A) dopamine receptor (180 aa).

The helical transmembrane segment at 1 to 10 (NTLLVCAAVI) threads the bilayer. Topologically, residues 11 to 21 (RFRHLRSKVTN) are cytoplasmic. Residues 22–48 (FFVISLAVSDLLVAVLVMPWKAVAEIA) form a helical membrane-spanning segment. Residues 49-57 (GFWPFGSFC) lie on the Extracellular side of the membrane. A disulfide bridge connects residues Cys57 and Cys147. A helical transmembrane segment spans residues 58–80 (NIWVAFDIMCSTASILNLCVISV). Over 81–99 (DRYWAISSPFRYERKMTPK) the chain is Cytoplasmic. The helical transmembrane segment at 100-124 (AAFILIGVAWTLSVLISFIPVQLSW) threads the bilayer. Residues 125–153 (HKAKPTSPPDGNATSLDETVDNCDSSLSR) are Extracellular-facing. N-linked (GlcNAc...) asparagine glycosylation is present at Asn136. The chain crosses the membrane as a helical span at residues 154–179 (TYSISSSLVNFYNPVAIMXVTYTRIH). A topological domain (cytoplasmic) is located at residue Arg180.

This sequence belongs to the G-protein coupled receptor 1 family. In terms of assembly, interacts with DNAJC14 via its C-terminus. Interacts with DRD2. Interacts with DORIP1.

It localises to the cell membrane. It is found in the endoplasmic reticulum membrane. Its subcellular location is the cell projection. The protein resides in the cilium membrane. In terms of biological role, dopamine receptor whose activity is mediated by G proteins which activate adenylyl cyclase. The chain is D(1A) dopamine receptor (DRD1) from Oryctolagus cuniculus (Rabbit).